The chain runs to 263 residues: MSLAMLTRNMLRRTSVRAFASSASNFTAGKDSARKLSPEEAKAEAAKLAIQSLKDVGSVFSSGSDDAVQPIDTRPVFENPELFGTLNLLHQGQVLKELQEKYDKNWNKLTDEEKKLGYYIAYGNWGPREKFINWNTQEAPYDLPFRVPSKVRLSNPQANDVVHKLEPLYLSETPVRKEQFDTSKMDPVTKTFIYITLFVMLFAISRDKNTGESGKPQEIIIEDRYMKSKLEKEQKEKEKEIEEENRKNQEKQARRKWYYLWLK.

Residues 1-26 constitute a mitochondrion transit peptide; that stretch reads MSLAMLTRNMLRRTSVRAFASSASNF. The helical transmembrane segment at 188 to 204 threads the bilayer; that stretch reads VTKTFIYITLFVMLFAI. Residues 232–252 are disordered; sequence KEQKEKEKEIEEENRKNQEKQ.

Belongs to the GEP7 family.

The protein localises to the mitochondrion membrane. Functionally, involved in respiratory growth and required for cell survival in the absence of prohibitins. In Clavispora lusitaniae (strain ATCC 42720) (Yeast), this protein is Genetic interactor of prohibitin 7, mitochondrial (GEP7).